Here is a 1171-residue protein sequence, read N- to C-terminus: Protein diaphanous homolog 3 (1171 aa).

A compositionally biased stretch (basic and acidic residues) spans Met-1–Ser-15. A disordered region spans residues Met-1 to His-40. The short motif at Ser-16–Leu-39 is the Nuclear localization signal element. Thr-47 carries the phosphothreonine modification. Ser-56 is subject to Phosphoserine. Positions Pro-60 to Ala-95 are disordered. Positions Ser-76–Ser-86 are enriched in low complexity. The region spanning Pro-93–Asp-455 is the GBD/FH3 domain. Ser-154 carries the phosphoserine modification. Coiled-coil stretches lie at residues Glu-373–Leu-403 and Gln-478–Leu-533. A disordered region spans residues Ala-532–Gly-601. The 71-residue stretch at Pro-540 to Pro-610 folds into the FH1 domain. Residues Ala-553–Leu-596 are compositionally biased toward pro residues. Ser-604 bears the Phosphoserine mark. An FH2 domain is found at Pro-615–Arg-1013. Coiled-coil stretches lie at residues Asp-887–Phe-918 and Met-988–Thr-1038. The DAD domain maps to Asp-1036–Asp-1066. A phosphoserine mark is found at Ser-1072 and Ser-1157. The Nuclear export signal signature appears at Glu-1162–Leu-1171.

Belongs to the formin homology family. Diaphanous subfamily. Post-translationally, ubiquitinated.

The protein resides in the cytoplasm. Its subcellular location is the nucleus. In terms of biological role, actin nucleation and elongation factor required for the assembly of F-actin structures, such as actin cables and stress fibers. Required for cytokinesis, stress fiber formation and transcriptional activation of the serum response factor. Binds to GTP-bound form of Rho and to profilin: acts in a Rho-dependent manner to recruit profilin to the membrane, where it promotes actin polymerization. DFR proteins couple Rho and Src tyrosine kinase during signaling and the regulation of actin dynamics. Also acts as an actin nucleation and elongation factor in the nucleus by promoting nuclear actin polymerization inside the nucleus to drive serum-dependent SRF-MRTFA activity. The polypeptide is Protein diaphanous homolog 3 (Diaph3) (Mus musculus (Mouse)).